The sequence spans 910 residues: Translation factor GUF1 homolog, mitochondrial (910 aa).

The interval 126–188 (RRGNGLPFER…DGGGAPEHPQ (63 aa)) is disordered. Positions 189–366 (QNVRNFCILA…RIVSDIPCPA (178 aa)) constitute a tr-type G domain. GTP is bound by residues 198 to 205 (AHIDSGKS), 259 to 263 (DTPGH), and 313 to 316 (NKID). The tract at residues 639-683 (GSGDGRADGSADGSADGSADGSGDSSAHGSSDRRGAGCARGSDDI) is disordered. Residues 646–667 (DGSADGSADGSADGSGDSSAHG) show a composition bias toward low complexity.

The protein belongs to the TRAFAC class translation factor GTPase superfamily. Classic translation factor GTPase family. LepA subfamily.

Its subcellular location is the mitochondrion inner membrane. The catalysed reaction is GTP + H2O = GDP + phosphate + H(+). Its function is as follows. Promotes mitochondrial protein synthesis. May act as a fidelity factor of the translation reaction, by catalyzing a one-codon backward translocation of tRNAs on improperly translocated ribosomes. Binds to mitochondrial ribosomes in a GTP-dependent manner. The chain is Translation factor GUF1 homolog, mitochondrial from Plasmodium vivax (strain Salvador I).